The chain runs to 252 residues: MILHAQTKHGKPGLPWLVFLHGFSGDCHEWQEVGEVFADYSRLYVDLPGHGGSAAISVDGFDDVTDLLRKTLVSYNILDFWLVGYSLGGRVAMMAACQGLAGLCGVIVEGGHPGLQNAEQRAERQRSDRQWAQRFRTEPLTAVFADWYQQPVFASLNDDQRRELVALRSNNNGATLAAMLEATSLAVQPDLRANLSARTFAFYYLCGERDSKFRALAAELAADCHVIPRAGHNAHRENPAGVIASLAQILRF.

Belongs to the AB hydrolase superfamily. MenH family. In terms of assembly, monomer.

The catalysed reaction is 5-enolpyruvoyl-6-hydroxy-2-succinyl-cyclohex-3-ene-1-carboxylate = (1R,6R)-6-hydroxy-2-succinyl-cyclohexa-2,4-diene-1-carboxylate + pyruvate. Its pathway is quinol/quinone metabolism; 1,4-dihydroxy-2-naphthoate biosynthesis; 1,4-dihydroxy-2-naphthoate from chorismate: step 3/7. It functions in the pathway quinol/quinone metabolism; menaquinone biosynthesis. Functionally, catalyzes a proton abstraction reaction that results in 2,5-elimination of pyruvate from 2-succinyl-5-enolpyruvyl-6-hydroxy-3-cyclohexene-1-carboxylate (SEPHCHC) and the formation of 2-succinyl-6-hydroxy-2,4-cyclohexadiene-1-carboxylate (SHCHC). The polypeptide is 2-succinyl-6-hydroxy-2,4-cyclohexadiene-1-carboxylate synthase (Shigella dysenteriae serotype 1 (strain Sd197)).